Consider the following 536-residue polypeptide: Pentatricopeptide repeat-containing protein At2g06000 (536 aa).

PPR repeat units lie at residues 102-136 (SFWT…GVSP), 137-167 (NNRL…SFEV), 170-200 (CCMV…HLRF), 205-239 (DTKT…GCEP), 240-274 (DIVT…SVCS), 276-310 (DVVT…GIYP), 311-345 (TNVT…GCFP), 346-380 (DVVT…GMFP), 381-415 (NAFT…DIIP), 416-450 (QPFM…KCKP), 451-485 (DKIT…GCSP), and 486-523 (DKIT…NVVP).

It belongs to the PPR family. P subfamily.

The chain is Pentatricopeptide repeat-containing protein At2g06000 from Arabidopsis thaliana (Mouse-ear cress).